The primary structure comprises 143 residues: Small ribosomal subunit protein uS9 (143 aa).

The tract at residues 123–143 (RPEPKKFGGRGARSRFQKSYR) is disordered. Residues 134-143 (ARSRFQKSYR) are compositionally biased toward basic residues.

This sequence belongs to the universal ribosomal protein uS9 family.

The polypeptide is Small ribosomal subunit protein uS9 (RPS16) (Kluyveromyces lactis (strain ATCC 8585 / CBS 2359 / DSM 70799 / NBRC 1267 / NRRL Y-1140 / WM37) (Yeast)).